Here is a 150-residue protein sequence, read N- to C-terminus: Large ribosomal subunit protein bL9 (150 aa).

Belongs to the bacterial ribosomal protein bL9 family.

Its function is as follows. Binds to the 23S rRNA. The polypeptide is Large ribosomal subunit protein bL9 (Wigglesworthia glossinidia brevipalpis).